Here is an 842-residue protein sequence, read N- to C-terminus: Alanine--tRNA ligase (842 aa).

Zn(2+) is bound by residues His549, His553, Cys650, and His654.

It belongs to the class-II aminoacyl-tRNA synthetase family. Zn(2+) serves as cofactor.

It is found in the cytoplasm. The enzyme catalyses tRNA(Ala) + L-alanine + ATP = L-alanyl-tRNA(Ala) + AMP + diphosphate. Functionally, catalyzes the attachment of alanine to tRNA(Ala) in a two-step reaction: alanine is first activated by ATP to form Ala-AMP and then transferred to the acceptor end of tRNA(Ala). Also edits incorrectly charged Ser-tRNA(Ala) and Gly-tRNA(Ala) via its editing domain. This Campylobacter jejuni subsp. jejuni serotype O:23/36 (strain 81-176) protein is Alanine--tRNA ligase.